Consider the following 137-residue polypeptide: Nucleoside diphosphate kinase (137 aa).

6 residues coordinate ATP: K10, F58, R86, T92, R103, and N113. Residue H116 is the Pros-phosphohistidine intermediate of the active site.

This sequence belongs to the NDK family. In terms of assembly, homotetramer. Requires Mg(2+) as cofactor.

It localises to the cytoplasm. It catalyses the reaction a 2'-deoxyribonucleoside 5'-diphosphate + ATP = a 2'-deoxyribonucleoside 5'-triphosphate + ADP. The enzyme catalyses a ribonucleoside 5'-diphosphate + ATP = a ribonucleoside 5'-triphosphate + ADP. In terms of biological role, major role in the synthesis of nucleoside triphosphates other than ATP. The ATP gamma phosphate is transferred to the NDP beta phosphate via a ping-pong mechanism, using a phosphorylated active-site intermediate. In Helicobacter acinonychis (strain Sheeba), this protein is Nucleoside diphosphate kinase.